Consider the following 356-residue polypeptide: Protein pelota homolog (356 aa).

The protein belongs to the eukaryotic release factor 1 family. Pelota subfamily. As to quaternary structure, monomer. A divalent metal cation is required as a cofactor.

It localises to the cytoplasm. In terms of biological role, may function in recognizing stalled ribosomes, interact with stem-loop structures in stalled mRNA molecules, and effect endonucleolytic cleavage of the mRNA. May play a role in the release non-functional ribosomes and degradation of damaged mRNAs. Has endoribonuclease activity. The polypeptide is Protein pelota homolog (Pyrococcus abyssi (strain GE5 / Orsay)).